The sequence spans 276 residues: NADPH-dependent 7-cyano-7-deazaguanine reductase (276 aa).

80–82 contributes to the substrate binding site; it reads VES. Residue 82-83 coordinates NADPH; the sequence is SK. Residue Cys-183 is the Thioimide intermediate of the active site. Asp-190 acts as the Proton donor in catalysis. 222–223 serves as a coordination point for substrate; sequence HE. 251 to 252 serves as a coordination point for NADPH; it reads RG.

The protein belongs to the GTP cyclohydrolase I family. QueF type 2 subfamily. As to quaternary structure, homodimer.

It is found in the cytoplasm. The catalysed reaction is 7-aminomethyl-7-carbaguanine + 2 NADP(+) = 7-cyano-7-deazaguanine + 2 NADPH + 3 H(+). The protein operates within tRNA modification; tRNA-queuosine biosynthesis. Its function is as follows. Catalyzes the NADPH-dependent reduction of 7-cyano-7-deazaguanine (preQ0) to 7-aminomethyl-7-deazaguanine (preQ1). This Burkholderia orbicola (strain MC0-3) protein is NADPH-dependent 7-cyano-7-deazaguanine reductase.